A 465-amino-acid polypeptide reads, in one-letter code: uncharacterized protein (465 aa).

The span at 1–15 (MEKNYIFENSIYKDE) shows a compositional bias: basic and acidic residues. Disordered regions lie at residues 1–31 (MEKN…NNSS) and 288–320 (QLEK…EQLP).

This is an uncharacterized protein from Dictyostelium discoideum (Social amoeba).